The sequence spans 230 residues: Sodium channel modifier 1 (230 aa).

Ser-2 is modified (phosphoserine). The Bipartite nuclear localization signal motif lies at 4–20; that stretch reads KREGDDWSQLNVLKKRR. The Matrin-type zinc-finger motif lies at 42–74; it reads FACAICPHRPVLDTLAMLTAHRAGKKHLSSLQL. Lys-67 is covalently cross-linked (Glycyl lysine isopeptide (Lys-Gly) (interchain with G-Cter in SUMO2)). 2 disordered regions span residues 76 to 106 and 129 to 191; these read YGKK…EAPL and RRKY…RALD. A compositionally biased stretch (basic and acidic residues) spans 89 to 100; that stretch reads PRQHNELRREET. Positions 142-151 are enriched in pro residues; that stretch reads SRPPLPPPEV. Positions 167-180 are enriched in polar residues; the sequence is GSQTKESATVSSPA. Residues Ser-183 and Ser-219 each carry the phosphoserine modification. Residues 188-230 are required for interaction with LUC7L2; sequence RALDHYLTLRSSGWIPDGRGRWIKDENVEFDSDEEEPPDLPLD.

Component of the minor spliceosome. Within this complex, interacts with RNF113A, as well as with SF3B1/SF3b155, SF3B2/SF3b145, SF3B3/SF3b130 and CDC5L. May interact with LUC7L2 and SNRNP70.

It localises to the nucleus. Its subcellular location is the nucleoplasm. The protein resides in the nucleus speckle. Functionally, as a component of the minor spliceosome, involved in the splicing of U12-type introns in pre-mRNAs. Plays a role in the regulation of primary cilia length and Hedgehog signaling. The protein is Sodium channel modifier 1 (SCNM1) of Bos taurus (Bovine).